A 606-amino-acid chain; its full sequence is Membrane protein insertase YidC (606 aa).

The helical transmembrane segment at 8-28 (LILATALSFIVILVWFVLFPP) threads the bilayer. The segment at 33–59 (MPLTGETSTELTPDAATGSLPSVTSDT) is disordered. A run of 6 helical transmembrane segments spans residues 116–136 (IVTM…YGWA), 348–368 (FIDS…FFLL), 374–394 (FIGN…AILL), 448–468 (LPIL…FVTI), 506–526 (SIMA…SMWL), and 542–562 (IFAW…SGLV).

This sequence belongs to the OXA1/ALB3/YidC family. Type 1 subfamily. Interacts with the Sec translocase complex via SecD. Specifically interacts with transmembrane segments of nascent integral membrane proteins during membrane integration.

Its subcellular location is the cell inner membrane. Functionally, required for the insertion and/or proper folding and/or complex formation of integral membrane proteins into the membrane. Involved in integration of membrane proteins that insert both dependently and independently of the Sec translocase complex, as well as at least some lipoproteins. Aids folding of multispanning membrane proteins. This Roseobacter denitrificans (strain ATCC 33942 / OCh 114) (Erythrobacter sp. (strain OCh 114)) protein is Membrane protein insertase YidC.